Reading from the N-terminus, the 922-residue chain is Non-centrosomal microtubule array protein 1 (922 aa).

Residues 1-10 show a composition bias toward polar residues; it reads MSNERVSTGS. 4 disordered regions span residues 1–134, 250–277, 465–491, and 533–563; these read MSNE…HLPP, PVRL…TVPR, KSRH…QMNL, and TQKE…SNLS. Composition is skewed to basic and acidic residues over residues 43–54 and 70–94; these read SMERKDMPDRPK and PKDR…KECA. The segment covering 99–113 has biased composition (low complexity); that stretch reads SNTSSEHSSRSNSST. Composition is skewed to basic and acidic residues over residues 256-276 and 468-484; these read RGDT…DTVP and HLSE…ERRG. The span at 539–563 shows a compositional bias: low complexity; the sequence is SHSTPSQSRHSSSKSSHFNGSSNLS. A coiled-coil region spans residues 564 to 728; the sequence is TSEQLRLQEM…RSVSTLRLEQ (165 aa).

Its subcellular location is the cytoplasm. The protein localises to the cytoskeleton. The protein resides in the apical cell membrane. It is found in the cell junction. It localises to the hemidesmosome. Its subcellular location is the adherens junction. Plays a role in the assembly of microtubule arrays in the germline acting redundantly with ptrn-1 to control circumferential microtubule assembly along the body which is necessary for larval development, viability, and morphology and integrity of the epidermis. Required for microtubule stability and anchorage by binding to microtubule minus ends. Recruited to hemidesomosomes in early embryonic elongation to direct the nucleation and growth of non-centrosomal microtubules. Its function is as follows. Required for normal nuclear migration in the embryonic epidermis. Functionally, directs the assembly of non-centrosomal microtubule arrays that determine the position of nuclei within intracellular compartments in the epidermis and this is independent of ptrn-1 activity. The sequence is that of Non-centrosomal microtubule array protein 1 from Caenorhabditis elegans.